A 366-amino-acid chain; its full sequence is MKNRILLINLGGPRDTSEIEKFLIDLFEDPLVFDLPLPEWIRKPLGKWVAKKRAPKVAQTYKSMGFGGGSPLVSETSKQANAIAKALEKITGEKWEGNITMTCGYPDIRKLNRDFLVPTKQNILLPLYPHFSRSTVLSTAKLVEQTTKFCPVSYEGWVAPFHSSQVYLESIRDLILDFFQNRLNRKDFLHSDSFQGVSNWETIDLIFSAHGIPIRLIEKGDRYREEINSNVENLKRLLYEKGFQGKCHTSFQSRVGPSKWTEPNTITMLEQLGKNGVKRVAVYPISFVSDHLETLEEIGEQLKKIAYNNGIAEYHRIPAPGIYPKFIEAMAKIGLESIQSSKNECICKKLGGHFPNLKSGECPINF.

The Fe cation site is built by H210 and E293.

This sequence belongs to the ferrochelatase family.

Its subcellular location is the cytoplasm. It carries out the reaction heme b + 2 H(+) = protoporphyrin IX + Fe(2+). It functions in the pathway porphyrin-containing compound metabolism; protoheme biosynthesis; protoheme from protoporphyrin-IX: step 1/1. In terms of biological role, catalyzes the ferrous insertion into protoporphyrin IX. This chain is Ferrochelatase, found in Leptospira borgpetersenii serovar Hardjo-bovis (strain JB197).